The primary structure comprises 208 residues: Pyridoxine/pyridoxamine 5'-phosphate oxidase (208 aa).

FMN-binding positions include 55 to 60, 70 to 71, Lys-76, Lys-77, and Gln-99; these read RMVLLK and YT. Lys-60 contacts substrate. Tyr-117, Arg-121, and Ser-125 together coordinate substrate. FMN contacts are provided by residues 134-135 and Trp-179; that span reads QS. 185-187 lines the substrate pocket; that stretch reads RLH. An FMN-binding site is contributed by Arg-189.

The protein belongs to the pyridoxamine 5'-phosphate oxidase family. In terms of assembly, homodimer. FMN serves as cofactor.

It carries out the reaction pyridoxamine 5'-phosphate + O2 + H2O = pyridoxal 5'-phosphate + H2O2 + NH4(+). The enzyme catalyses pyridoxine 5'-phosphate + O2 = pyridoxal 5'-phosphate + H2O2. It participates in cofactor metabolism; pyridoxal 5'-phosphate salvage; pyridoxal 5'-phosphate from pyridoxamine 5'-phosphate: step 1/1. Its pathway is cofactor metabolism; pyridoxal 5'-phosphate salvage; pyridoxal 5'-phosphate from pyridoxine 5'-phosphate: step 1/1. Catalyzes the oxidation of either pyridoxine 5'-phosphate (PNP) or pyridoxamine 5'-phosphate (PMP) into pyridoxal 5'-phosphate (PLP). This chain is Pyridoxine/pyridoxamine 5'-phosphate oxidase, found in Brucella abortus biovar 1 (strain 9-941).